Here is a 317-residue protein sequence, read N- to C-terminus: SVP1-like protein 2 (317 aa).

WD repeat units lie at residues 119–159 (AHST…KMAE) and 164–203 (VDHA…NAPY).

This sequence belongs to the WD repeat PROPPIN family.

The protein localises to the vacuole membrane. The protein resides in the cytoplasmic vesicle membrane. Involved in mitochondrial or peroxisomal functions and amino acid signaling pathways. The protein is SVP1-like protein 2 (hsv2) of Emericella nidulans (strain FGSC A4 / ATCC 38163 / CBS 112.46 / NRRL 194 / M139) (Aspergillus nidulans).